The primary structure comprises 346 residues: Phosphoribosylformylglycinamidine cyclo-ligase (346 aa).

This sequence belongs to the AIR synthase family.

It localises to the cytoplasm. The enzyme catalyses 2-formamido-N(1)-(5-O-phospho-beta-D-ribosyl)acetamidine + ATP = 5-amino-1-(5-phospho-beta-D-ribosyl)imidazole + ADP + phosphate + H(+). Its pathway is purine metabolism; IMP biosynthesis via de novo pathway; 5-amino-1-(5-phospho-D-ribosyl)imidazole from N(2)-formyl-N(1)-(5-phospho-D-ribosyl)glycinamide: step 2/2. The sequence is that of Phosphoribosylformylglycinamidine cyclo-ligase from Bacillus cereus (strain AH187).